A 316-amino-acid chain; its full sequence is MVKLSGVYKGMRKGYGETLIELGKKYENLVVLDADLSGSTQTAMFAKEFPERFFNAGVAEQNMIGMAAGLATTGKIVFASSFSMFASGRAWEIIRNLVAYPKLNVKIVATHAGITVGEDGASHQMCEDIAIMRAIPNMVVIAPTDYYHTKNVIRTIAEYKGPVYVRMPRRDTEIIYENEEEATFEIGKGKILVDGEDLTIIATGEEVPEALRAGEILKENGISAEIVEMATIKPIDEEIIKKSKDFVVTVEDHSIIGGLGGAVAEVIASNGLNKKLLRIGINDVFGRSGKADELLKYYGLDGESIAKRIMEEMKKE.

The protein belongs to the transketolase family. Requires thiamine diphosphate as cofactor.

It carries out the reaction D-sedoheptulose 7-phosphate + D-glyceraldehyde 3-phosphate = aldehydo-D-ribose 5-phosphate + D-xylulose 5-phosphate. The chain is Putative transketolase C-terminal section from Methanocaldococcus jannaschii (strain ATCC 43067 / DSM 2661 / JAL-1 / JCM 10045 / NBRC 100440) (Methanococcus jannaschii).